Here is a 215-residue protein sequence, read N- to C-terminus: tRNA (guanine-N(7)-)-methyltransferase (215 aa).

Residues Glu44, Glu69, Asp96, and Asp118 each contribute to the S-adenosyl-L-methionine site. Asp118 is an active-site residue. Residues Lys122, Asp154, and 191 to 194 (TEYE) contribute to the substrate site.

The protein belongs to the class I-like SAM-binding methyltransferase superfamily. TrmB family.

The catalysed reaction is guanosine(46) in tRNA + S-adenosyl-L-methionine = N(7)-methylguanosine(46) in tRNA + S-adenosyl-L-homocysteine. Its pathway is tRNA modification; N(7)-methylguanine-tRNA biosynthesis. Catalyzes the formation of N(7)-methylguanine at position 46 (m7G46) in tRNA. This Exiguobacterium sp. (strain ATCC BAA-1283 / AT1b) protein is tRNA (guanine-N(7)-)-methyltransferase.